A 259-amino-acid polypeptide reads, in one-letter code: Probable ABC transporter permease protein RF_0080 (259 aa).

5 helical membrane passes run 13 to 35, 49 to 69, 148 to 168, 195 to 215, and 237 to 257; these read TIKFAQSVGSFSLFSFAAVSSII, LFIGFHSLPVVAMTTFFSGAV, VIAAIITMPCLVLIGDIIGVM, PIDVISGLVKAGVFGFIISII, and AVVNSSILILISNYLITELFF.

Belongs to the MlaE permease family.

Its subcellular location is the cell inner membrane. In terms of biological role, could be part of an ABC transporter complex. The sequence is that of Probable ABC transporter permease protein RF_0080 from Rickettsia felis (strain ATCC VR-1525 / URRWXCal2) (Rickettsia azadi).